A 178-amino-acid chain; its full sequence is Cytochrome b6-f complex iron-sulfur subunit (178 aa).

A helical membrane pass occupies residues 20–42 (LLTFGTATGVALGALYPVANYFM). Positions 65–161 (KTGWLATHQA…VDIEDDAVLV (97 aa)) constitute a Rieske domain. Residues cysteine 107, histidine 109, cysteine 125, and histidine 128 each coordinate [2Fe-2S] cluster. An intrachain disulfide couples cysteine 112 to cysteine 127.

The protein belongs to the Rieske iron-sulfur protein family. As to quaternary structure, the 4 large subunits of the cytochrome b6-f complex are cytochrome b6, subunit IV (17 kDa polypeptide, PetD), cytochrome f and the Rieske protein, while the 4 small subunits are PetG, PetL, PetM and PetN. The complex functions as a dimer. It depends on [2Fe-2S] cluster as a cofactor.

The protein resides in the cellular thylakoid membrane. It catalyses the reaction 2 oxidized [plastocyanin] + a plastoquinol + 2 H(+)(in) = 2 reduced [plastocyanin] + a plastoquinone + 4 H(+)(out). Component of the cytochrome b6-f complex, which mediates electron transfer between photosystem II (PSII) and photosystem I (PSI), cyclic electron flow around PSI, and state transitions. This is Cytochrome b6-f complex iron-sulfur subunit from Prochlorococcus marinus (strain AS9601).